Consider the following 446-residue polypeptide: Hepatocyte nuclear factor 4-beta (446 aa).

The nuclear receptor DNA-binding region spans 47–122; the sequence is NSFCAICGDR…AGMKKEAVQN (76 aa). 2 consecutive NR C4-type zinc fingers follow at residues 50–70 and 86–110; these read CAICGDRATGKHYGASSCDGC and CRFSRQCIVDKDKRNQCRYCRLRKC. One can recognise an NR LBD domain in the interval 137–366; it reads NGSLSINVLT…SLLQELLLGG (230 aa).

It belongs to the nuclear hormone receptor family. NR2 subfamily. As to quaternary structure, homodimerization is required for HNF4-alpha to bind to its recognition site. As to expression, expressed in liver, kidney, stomach, intestine, lung, ovary, and testis. Not expressed in fat, muscle and brain.

The protein resides in the nucleus. Transcription factor; binds and activates the promoter for the HNF1-alpha gene. Seems to have a lower DNA binding activity than HNF4-alpha and is a weaker transactivator than the alpha isoform. The sequence is that of Hepatocyte nuclear factor 4-beta (hnf4b) from Xenopus laevis (African clawed frog).